We begin with the raw amino-acid sequence, 694 residues long: Frizzled-8 (694 aa).

An N-terminal signal peptide occupies residues M1–A27. Residues A28 to A275 are Extracellular-facing. An FZ domain is found at A30–Y151. Intrachain disulfides connect C35/C96, C43/C89, C80/C118, C107/C148, and C111/C135. Residue N49 is glycosylated (N-linked (GlcNAc...) asparagine). Q71 to I78 provides a ligand contact to hexadecanoate. Residues I95–Y100 form a wnt-binding region. A wnt-binding region spans residues L147 to N152. N-linked (GlcNAc...) asparagine glycosylation occurs at N152. Residues D155–A226 form a disordered region. The segment covering P161–Q175 has biased composition (pro residues). A compositionally biased stretch (low complexity) spans P176 to P186. The span at R210–A225 shows a compositional bias: gly residues. A helical membrane pass occupies residues F276–V296. The Cytoplasmic portion of the chain corresponds to S297–P312. Residues I313–A333 form a helical membrane-spanning segment. Over G334–C396 the chain is Extracellular. A helical membrane pass occupies residues T397–L417. Over S418–Q439 the chain is Cytoplasmic. The helical transmembrane segment at Y440–S460 threads the bilayer. The Extracellular portion of the chain corresponds to S461–G483. A glycan (N-linked (GlcNAc...) asparagine) is linked at N475. The helical transmembrane segment at F484–F504 threads the bilayer. The Cytoplasmic segment spans residues V505–R532. The chain crosses the membrane as a helical span at residues L533–Y553. Residues E554–A584 are Extracellular-facing. The helical transmembrane segment at V585 to W605 threads the bilayer. The Cytoplasmic portion of the chain corresponds to S606–V694. Residues K608 to W613 carry the Lys-Thr-X-X-X-Trp motif, mediates interaction with the PDZ domain of Dvl family members motif. The segment covering G648–S664 has biased composition (gly residues). The segment at G648–D668 is disordered. A PDZ-binding motif is present at residues S692–V694.

The protein belongs to the G-protein coupled receptor Fz/Smo family. Component of a Wnt-signaling complex that contains a WNT protein, a FZD protein and LRP5 or LRP6. Interacts directly with LRP5 or LRP6; the interaction is promoted by Wnt-binding and signaling and inhibited by DKK1. Interacts with GPOC, RSPO1 and RSPO3. Interacts with glypican GPC3. Post-translationally, ubiquitinated by ZNRF3, leading to its degradation by the proteasome. Most abundant in fetal kidney, followed by brain and lung. In adult tissues, expressed in kidney, heart, pancreas and skeletal muscle.

The protein localises to the membrane. Its subcellular location is the golgi apparatus. It is found in the cell membrane. Functionally, receptor for Wnt proteins. Component of the Wnt-Fzd-LRP5-LRP6 complex that triggers beta-catenin signaling through inducing aggregation of receptor-ligand complexes into ribosome-sized signalosomes. The beta-catenin canonical signaling pathway leads to the activation of disheveled proteins, inhibition of GSK-3 kinase, nuclear accumulation of beta-catenin and activation of Wnt target genes. A second signaling pathway involving PKC and calcium fluxes has been seen for some family members, but it is not yet clear if it represents a distinct pathway or if it can be integrated in the canonical pathway, as PKC seems to be required for Wnt-mediated inactivation of GSK-3 kinase. Both pathways seem to involve interactions with G-proteins. May be involved in transduction and intercellular transmission of polarity information during tissue morphogenesis and/or in differentiated tissues. Coreceptor along with RYK of Wnt proteins, such as WNT1. In Homo sapiens (Human), this protein is Frizzled-8 (FZD8).